A 717-amino-acid chain; its full sequence is Trimethylamine N-oxide transport system permease protein TmoV (717 aa).

17 helical membrane passes run 10–30 (FFQW…IEVP), 69–89 (LPPL…FLMN), 120–140 (FMTF…ETIV), 153–173 (WAEL…ILGY), 175–195 (LSGK…SVFG), 206–226 (FILV…VMAF), 238–258 (ILLV…IVLF), 265–285 (AVII…LLGL), 319–339 (ILIG…ISAF), 355–375 (QLNI…AILL), 402–422 (ILFF…GSFY), 452–472 (IWDT…VDVL), 488–508 (LVLV…LVVG), 527–547 (LYMA…VGII), 574–594 (LIPV…AVIV), 643–663 (MLGL…GAFI), and 683–703 (GIGL…DHLI). The ABC transmembrane type-1 1 domain occupies 200-379 (SMQTLSFILV…LIAILLDKMS (180 aa)). The region spanning 523-703 (ALVTLYMATF…FIGLIFDHLI (181 aa)) is the ABC transmembrane type-1 2 domain.

The protein belongs to the binding-protein-dependent transport system permease family. In terms of assembly, the complex is probably composed of two ATP-binding proteins (TmoW), two transmembrane proteins (TmoV) and a solute-binding protein (TmoX).

The protein localises to the cell inner membrane. Its function is as follows. Part of the ABC transporter complex TmoXWV involved in trimethylamine N-oxide (TMAO) import. Responsible for the translocation of the substrate across the membrane. This is Trimethylamine N-oxide transport system permease protein TmoV from Pelagibacter ubique (strain HTCC1062).